We begin with the raw amino-acid sequence, 319 residues long: L-lactate dehydrogenase 2 (319 aa).

NAD(+)-binding positions include Val-17, Asp-38, Lys-43, Tyr-69, and 83-84 (GA). Residues Gln-86 and Arg-92 each contribute to the substrate site. Residues Ser-105, 122 to 124 (ATN), and Ser-147 contribute to the NAD(+) site. 124 to 127 (NPVD) lines the substrate pocket. Substrate is bound at residue 152-155 (DSGR). Beta-D-fructose 1,6-bisphosphate is bound by residues Arg-157 and His-172. The Proton acceptor role is filled by His-179. Tyr-224 carries the post-translational modification Phosphotyrosine. Thr-233 serves as a coordination point for substrate.

The protein belongs to the LDH/MDH superfamily. LDH family. As to quaternary structure, homotetramer.

The protein resides in the cytoplasm. It catalyses the reaction (S)-lactate + NAD(+) = pyruvate + NADH + H(+). The protein operates within fermentation; pyruvate fermentation to lactate; (S)-lactate from pyruvate: step 1/1. Allosterically activated by fructose 1,6-bisphosphate (FBP). Catalyzes the conversion of lactate to pyruvate. The polypeptide is L-lactate dehydrogenase 2 (Peribacillus psychrosaccharolyticus (Bacillus psychrosaccharolyticus)).